Here is a 411-residue protein sequence, read N- to C-terminus: MLAQNSREVLDKDLESHIPGAYSPAPPSSSLPTQNESNLQQSEKPLKHFENKKFKGEDVFAHSISKPFDGQNDEEKPSLYSHLTNELYETHDSSDYFGTYMEREESGHDEEEADKDASFTGYYNSRNNDEEGSELADSQMLPMTESFADIEDIHHHQHEDEFSSSNKDKGFTYEKPVTELPPKRPPYHYESSSTSISFVNGGPNFRKVKSGLLKPDADAASNLSTTSLVNQEYVMKQVTPNEYSMEYLRESFPQTPMGTEASGYSFDRTPHKSDIQASDRLNALNEKLLQGIQQSHQPYHYTNVKDSQGSHQTKVTIEENMEAPSHQAANRTTLTDSPLGIVEDETTILTDLEPSGPGLQKRASETSMSTNVSLPYYQNGRRVRNILTPYPTVSLASTMTSETEDVSEERI.

Disordered stretches follow at residues M1–K52, E102–D137, and H156–S191. A compositionally biased stretch (polar residues) spans T33–E43. Residues H156 to T172 are compositionally biased toward basic and acidic residues.

It localises to the cytoplasm. Its subcellular location is the nucleus. In terms of biological role, has a role in meiosis. This is Meiotically up-regulated gene 147 protein (mug147) from Schizosaccharomyces pombe (strain 972 / ATCC 24843) (Fission yeast).